We begin with the raw amino-acid sequence, 370 residues long: tRNA-specific 2-thiouridylase MnmA (370 aa).

ATP contacts are provided by residues 24–31 (AMSGGVDS) and L50. Residue C119 is the Nucleophile of the active site. C119 and C215 are oxidised to a cystine. G143 provides a ligand contact to ATP. The interval 165 to 167 (KDQ) is interaction with tRNA. Residue C215 is the Cysteine persulfide intermediate of the active site.

It belongs to the MnmA/TRMU family.

The protein localises to the cytoplasm. The catalysed reaction is S-sulfanyl-L-cysteinyl-[protein] + uridine(34) in tRNA + AH2 + ATP = 2-thiouridine(34) in tRNA + L-cysteinyl-[protein] + A + AMP + diphosphate + H(+). Its function is as follows. Catalyzes the 2-thiolation of uridine at the wobble position (U34) of tRNA, leading to the formation of s(2)U34. The polypeptide is tRNA-specific 2-thiouridylase MnmA (Wolbachia pipientis wMel).